The chain runs to 155 residues: Protein-export protein SecB (155 aa).

The protein belongs to the SecB family. Homotetramer, a dimer of dimers. One homotetramer interacts with 1 SecA dimer.

It is found in the cytoplasm. Its function is as follows. One of the proteins required for the normal export of preproteins out of the cell cytoplasm. It is a molecular chaperone that binds to a subset of precursor proteins, maintaining them in a translocation-competent state. It also specifically binds to its receptor SecA. In Vibrio vulnificus (strain CMCP6), this protein is Protein-export protein SecB.